An 878-amino-acid polypeptide reads, in one-letter code: Alanine--tRNA ligase (878 aa).

Zn(2+) is bound by residues H564, H568, C666, and H670.

Belongs to the class-II aminoacyl-tRNA synthetase family. Homotetramer. The cofactor is Zn(2+).

It is found in the cytoplasm. It catalyses the reaction tRNA(Ala) + L-alanine + ATP = L-alanyl-tRNA(Ala) + AMP + diphosphate. Functionally, catalyzes the attachment of alanine to tRNA(Ala) in a two-step reaction: alanine is first activated by ATP to form Ala-AMP and then transferred to the acceptor end of tRNA(Ala). Also edits incorrectly charged Ser-tRNA(Ala) and Gly-tRNA(Ala) via its editing domain. This chain is Alanine--tRNA ligase, found in Buchnera aphidicola subsp. Acyrthosiphon pisum (strain APS) (Acyrthosiphon pisum symbiotic bacterium).